Here is a 146-residue protein sequence, read N- to C-terminus: UPF0178 protein OB0454 (146 aa).

It belongs to the UPF0178 family.

The protein is UPF0178 protein OB0454 of Oceanobacillus iheyensis (strain DSM 14371 / CIP 107618 / JCM 11309 / KCTC 3954 / HTE831).